Reading from the N-terminus, the 291-residue chain is UTP--glucose-1-phosphate uridylyltransferase (291 aa).

The protein belongs to the UDPGP type 2 family.

It carries out the reaction alpha-D-glucose 1-phosphate + UTP + H(+) = UDP-alpha-D-glucose + diphosphate. May play a role in stationary phase survival. The chain is UTP--glucose-1-phosphate uridylyltransferase (galU) from Mycoplasma pneumoniae (strain ATCC 29342 / M129 / Subtype 1) (Mycoplasmoides pneumoniae).